Reading from the N-terminus, the 198-residue chain is Probable GTP-binding protein EngB (198 aa).

An EngB-type G domain is found at 22–195; it reads DLPEIALAGR…WKAIHKFTKT (174 aa). GTP is bound by residues 30–37, 57–61, 75–78, 142–145, and 174–176; these read GRSNVGKS, GKTQT, DVPG, TKAD, and FSS. 2 residues coordinate Mg(2+): serine 37 and threonine 59.

The protein belongs to the TRAFAC class TrmE-Era-EngA-EngB-Septin-like GTPase superfamily. EngB GTPase family. Requires Mg(2+) as cofactor.

Functionally, necessary for normal cell division and for the maintenance of normal septation. This chain is Probable GTP-binding protein EngB, found in Bacillus anthracis (strain A0248).